The primary structure comprises 352 residues: Phospho-N-acetylmuramoyl-pentapeptide-transferase (352 aa).

10 helical membrane-spanning segments follow: residues 16-36 (YITFRAGAAFFIAFFLALLFM), 66-86 (TPTMGGLVFIGATLLASLLCA), 88-108 (LNNLYVLAGLAVILLFGLIGL), 129-149 (MLYLVLAGASVSAALFYFGME), 160-180 (PLLSMGIVAILFWTLVMVATS), 191-211 (GLATVPSVYALVSLSVFVYIA), 228-248 (SGEAVIVSAALVGALIGFLWF), 255-275 (LFMGDSGSLSIGGFIAYMAII), 280-300 (FLLFLIGSIFVIETVSVILQI), and 329-349 (KIIVRFWIIALMSNIIALLTL).

It belongs to the glycosyltransferase 4 family. MraY subfamily. Mg(2+) is required as a cofactor.

The protein localises to the cell inner membrane. The enzyme catalyses UDP-N-acetyl-alpha-D-muramoyl-L-alanyl-gamma-D-glutamyl-meso-2,6-diaminopimeloyl-D-alanyl-D-alanine + di-trans,octa-cis-undecaprenyl phosphate = di-trans,octa-cis-undecaprenyl diphospho-N-acetyl-alpha-D-muramoyl-L-alanyl-D-glutamyl-meso-2,6-diaminopimeloyl-D-alanyl-D-alanine + UMP. It functions in the pathway cell wall biogenesis; peptidoglycan biosynthesis. Functionally, catalyzes the initial step of the lipid cycle reactions in the biosynthesis of the cell wall peptidoglycan: transfers peptidoglycan precursor phospho-MurNAc-pentapeptide from UDP-MurNAc-pentapeptide onto the lipid carrier undecaprenyl phosphate, yielding undecaprenyl-pyrophosphoryl-MurNAc-pentapeptide, known as lipid I. The polypeptide is Phospho-N-acetylmuramoyl-pentapeptide-transferase (Wolinella succinogenes (strain ATCC 29543 / DSM 1740 / CCUG 13145 / JCM 31913 / LMG 7466 / NCTC 11488 / FDC 602W) (Vibrio succinogenes)).